Here is a 247-residue protein sequence, read N- to C-terminus: Lysosomal membrane ascorbate-dependent ferrireductase CYB561A3 (247 aa).

Residues 1–3 lie on the Cytoplasmic side of the membrane; sequence MRG. A helical membrane pass occupies residues 4-24; the sequence is IVGFYITYLLCLILGIACVVL. The Cytochrome b561 domain occupies 13–223; it reads LCLILGIACV…FGLVVLKILS (211 aa). Over 25-46 the chain is Lumenal; it reads VVHWNFMYRDGFAWDGSSKNFN. The chain crosses the membrane as a helical span at residues 47-67; it reads WHPVLMVTGMLVLYGNAAVVY. Residues His-48 and Arg-68 each contribute to the heme b site. Topologically, residues 68–82 are cytoplasmic; sequence RIPLTWGHNKLPWKL. L-ascorbate-binding residues include Lys-77 and Lys-81. A helical membrane pass occupies residues 83-103; it reads LHAGLLLLSFIFSVIGLCAVF. Residues His-84, 113 to 116, and His-118 each bind heme b; that span reads NLYS. Residues 104–120 lie on the Lumenal side of the membrane; sequence NFHNVHHTANLYSLHSW. A helical membrane pass occupies residues 121–141; the sequence is VGICTAALFTAQWVMGFTSFL. Residues 142 to 155 lie on the Cytoplasmic side of the membrane; that stretch reads LPCTPMAVRAFVKP. Arg-150 provides a ligand contact to L-ascorbate. The chain crosses the membrane as a helical span at residues 156-176; the sequence is THVWMGAMILVLSIVSCISGI. 2 residues coordinate heme b: His-157 and Glu-178. The Lumenal segment spans residues 177 to 201; sequence NEKLFFVLKETTNGTKPYSALPPEA. N-linked (GlcNAc...) asparagine glycosylation is present at Asn-189. A helical membrane pass occupies residues 202-222; the sequence is VAANSLGVIIVAFGLVVLKIL. At 223–247 the chain is on the cytoplasmic side; that stretch reads SNQMWQRPEPGDDEGVYRPLAYDGS. Residue Gln-228 coordinates heme b.

Homodimer. Heme b serves as cofactor.

It is found in the late endosome membrane. Its subcellular location is the lysosome membrane. It carries out the reaction Fe(3+)(out) + L-ascorbate(in) = monodehydro-L-ascorbate radical(in) + Fe(2+)(out) + H(+). Transmembrane reductase that uses ascorbate as an electron donor in the cytoplasm and transfers electrons across membranes to reduce iron cations Fe(3+) into Fe(2+) in the lumen of the late endosome and lysosome. Reduced iron can then be extruded from the late endosome and lysosome to the cytoplasm by divalent metal-specific transporters. It is therefore most probably involved in endosomal and lysosomal cellular iron homeostasis. The protein is Lysosomal membrane ascorbate-dependent ferrireductase CYB561A3 (cyb561a3a) of Danio rerio (Zebrafish).